A 159-amino-acid polypeptide reads, in one-letter code: Crossover junction endodeoxyribonuclease RuvC (159 aa).

Residues Asp7, Glu67, and Asp139 contribute to the active site. The Mg(2+) site is built by Asp7, Glu67, and Asp139.

The protein belongs to the RuvC family. Homodimer which binds Holliday junction (HJ) DNA. The HJ becomes 2-fold symmetrical on binding to RuvC with unstacked arms; it has a different conformation from HJ DNA in complex with RuvA. In the full resolvosome a probable DNA-RuvA(4)-RuvB(12)-RuvC(2) complex forms which resolves the HJ. It depends on Mg(2+) as a cofactor.

The protein resides in the cytoplasm. It carries out the reaction Endonucleolytic cleavage at a junction such as a reciprocal single-stranded crossover between two homologous DNA duplexes (Holliday junction).. Its function is as follows. The RuvA-RuvB-RuvC complex processes Holliday junction (HJ) DNA during genetic recombination and DNA repair. Endonuclease that resolves HJ intermediates. Cleaves cruciform DNA by making single-stranded nicks across the HJ at symmetrical positions within the homologous arms, yielding a 5'-phosphate and a 3'-hydroxyl group; requires a central core of homology in the junction. The consensus cleavage sequence is 5'-(A/T)TT(C/G)-3'. Cleavage occurs on the 3'-side of the TT dinucleotide at the point of strand exchange. HJ branch migration catalyzed by RuvA-RuvB allows RuvC to scan DNA until it finds its consensus sequence, where it cleaves and resolves the cruciform DNA. The polypeptide is Crossover junction endodeoxyribonuclease RuvC (Orientia tsutsugamushi (strain Boryong) (Rickettsia tsutsugamushi)).